The following is a 543-amino-acid chain: CTP synthase (543 aa).

The interval 1-266 is amidoligase domain; the sequence is MKTNYIFVTG…DDYICERFSL (266 aa). CTP is bound at residue serine 14. Serine 14 serves as a coordination point for UTP. ATP-binding positions include 15-20 and aspartate 72; that span reads SLGKGI. Mg(2+)-binding residues include aspartate 72 and glutamate 140. CTP contacts are provided by residues 147 to 149, 187 to 192, and lysine 223; these read DIE and KTKPTQ. UTP-binding positions include 187-192 and lysine 223; that span reads KTKPTQ. 239–241 serves as a coordination point for ATP; sequence KDV. The 248-residue stretch at 291–538 folds into the Glutamine amidotransferase type-1 domain; it reads TVGIVGKYID…IKAASEYQKK (248 aa). Residue glycine 352 participates in L-glutamine binding. The active-site Nucleophile; for glutamine hydrolysis is the cysteine 379. Residues 380–383, glutamate 403, and arginine 466 each bind L-glutamine; that span reads LGMQ. Residues histidine 511 and glutamate 513 contribute to the active site.

This sequence belongs to the CTP synthase family. As to quaternary structure, homotetramer.

The catalysed reaction is UTP + L-glutamine + ATP + H2O = CTP + L-glutamate + ADP + phosphate + 2 H(+). It carries out the reaction L-glutamine + H2O = L-glutamate + NH4(+). The enzyme catalyses UTP + NH4(+) + ATP = CTP + ADP + phosphate + 2 H(+). Its pathway is pyrimidine metabolism; CTP biosynthesis via de novo pathway; CTP from UDP: step 2/2. Allosterically activated by GTP, when glutamine is the substrate; GTP has no effect on the reaction when ammonia is the substrate. The allosteric effector GTP functions by stabilizing the protein conformation that binds the tetrahedral intermediate(s) formed during glutamine hydrolysis. Inhibited by the product CTP, via allosteric rather than competitive inhibition. Its function is as follows. Catalyzes the ATP-dependent amination of UTP to CTP with either L-glutamine or ammonia as the source of nitrogen. Regulates intracellular CTP levels through interactions with the four ribonucleotide triphosphates. The polypeptide is CTP synthase (Baumannia cicadellinicola subsp. Homalodisca coagulata).